The following is a 152-amino-acid chain: ESAT-6 secretion machinery protein EssA (152 aa).

Residues 1-114 (MLMNSVIALT…PYIQNKQEKK (114 aa)) are Cytoplasmic-facing. The disordered stretch occupies residues 62 to 83 (ERQQQIKNDMFQNQASHSTRLN). Residues 66 to 80 (QIKNDMFQNQASHST) show a composition bias toward polar residues. A helical transmembrane segment spans residues 115-135 (IFPYILMSVGAFLTLGFVIFS). At 136-152 (IHKGRRTKNESARKSNI) the chain is on the extracellular side.

It belongs to the EssA family.

It localises to the cell membrane. Its function is as follows. Component of the ESAT-6 secretion system (Ess). Required for the secretion of EsxA and EsxB. The protein is ESAT-6 secretion machinery protein EssA of Staphylococcus aureus (strain COL).